Reading from the N-terminus, the 482-residue chain is Protein nucleotidyltransferase YdiU (482 aa).

Positions 88, 90, 91, 111, 123, 124, 174, and 181 each coordinate ATP. Asp250 functions as the Proton acceptor in the catalytic mechanism. 2 residues coordinate Mg(2+): Asn251 and Asp260. ATP is bound at residue Asp260.

It belongs to the SELO family. It depends on Mg(2+) as a cofactor. Requires Mn(2+) as cofactor.

It catalyses the reaction L-seryl-[protein] + ATP = 3-O-(5'-adenylyl)-L-seryl-[protein] + diphosphate. The catalysed reaction is L-threonyl-[protein] + ATP = 3-O-(5'-adenylyl)-L-threonyl-[protein] + diphosphate. The enzyme catalyses L-tyrosyl-[protein] + ATP = O-(5'-adenylyl)-L-tyrosyl-[protein] + diphosphate. It carries out the reaction L-histidyl-[protein] + UTP = N(tele)-(5'-uridylyl)-L-histidyl-[protein] + diphosphate. It catalyses the reaction L-seryl-[protein] + UTP = O-(5'-uridylyl)-L-seryl-[protein] + diphosphate. The catalysed reaction is L-tyrosyl-[protein] + UTP = O-(5'-uridylyl)-L-tyrosyl-[protein] + diphosphate. Its function is as follows. Nucleotidyltransferase involved in the post-translational modification of proteins. It can catalyze the addition of adenosine monophosphate (AMP) or uridine monophosphate (UMP) to a protein, resulting in modifications known as AMPylation and UMPylation. The protein is Protein nucleotidyltransferase YdiU of Cronobacter sakazakii (strain ATCC BAA-894) (Enterobacter sakazakii).